The following is a 161-amino-acid chain: Nucleotide-binding protein Glov_3198 (161 aa).

This sequence belongs to the YajQ family.

Nucleotide-binding protein. The chain is Nucleotide-binding protein Glov_3198 from Trichlorobacter lovleyi (strain ATCC BAA-1151 / DSM 17278 / SZ) (Geobacter lovleyi).